Reading from the N-terminus, the 121-residue chain is Phosphoribosyl-AMP cyclohydrolase (121 aa).

Asp76 provides a ligand contact to Mg(2+). Cys77 lines the Zn(2+) pocket. Positions 78 and 80 each coordinate Mg(2+). Residues Cys93 and Cys100 each contribute to the Zn(2+) site.

The protein belongs to the PRA-CH family. In terms of assembly, homodimer. Mg(2+) serves as cofactor. Zn(2+) is required as a cofactor.

The protein localises to the cytoplasm. It catalyses the reaction 1-(5-phospho-beta-D-ribosyl)-5'-AMP + H2O = 1-(5-phospho-beta-D-ribosyl)-5-[(5-phospho-beta-D-ribosylamino)methylideneamino]imidazole-4-carboxamide. It participates in amino-acid biosynthesis; L-histidine biosynthesis; L-histidine from 5-phospho-alpha-D-ribose 1-diphosphate: step 3/9. In terms of biological role, catalyzes the hydrolysis of the adenine ring of phosphoribosyl-AMP. In Methanococcoides burtonii (strain DSM 6242 / NBRC 107633 / OCM 468 / ACE-M), this protein is Phosphoribosyl-AMP cyclohydrolase.